Consider the following 174-residue polypeptide: tRNA (cytidine(56)-2'-O)-methyltransferase (174 aa).

Residues Leu-80, 105-109, and 123-130 each bind S-adenosyl-L-methionine; these read GAEKV and ISNQPHSE.

The protein belongs to the aTrm56 family. As to quaternary structure, homodimer.

The protein localises to the cytoplasm. It catalyses the reaction cytidine(56) in tRNA + S-adenosyl-L-methionine = 2'-O-methylcytidine(56) in tRNA + S-adenosyl-L-homocysteine + H(+). In terms of biological role, specifically catalyzes the AdoMet-dependent 2'-O-ribose methylation of cytidine at position 56 in tRNAs. The sequence is that of tRNA (cytidine(56)-2'-O)-methyltransferase from Metallosphaera sedula (strain ATCC 51363 / DSM 5348 / JCM 9185 / NBRC 15509 / TH2).